A 374-amino-acid polypeptide reads, in one-letter code: Double homeobox protein 4C (374 aa).

The segment covering 1–10 (MALPTPSDST) has biased composition (polar residues). Disordered regions lie at residues 1-24 (MALP…RRRL), 72-102 (SRQL…TAVT), and 218-374 (LQPS…YELL). DNA-binding regions (homeobox) lie at residues 19–78 (GRRR…LRQH) and 94–153 (GRRK…PGQG). The segment covering 265–274 (KSREDRDPQR) has biased composition (basic and acidic residues). Low complexity-rich tracts occupy residues 278 to 302 (PGPC…LAPP) and 319 to 329 (AGAAWEPQAGA). The span at 354-374 (QPLQEPGRSSTVTSSLLYELL) shows a compositional bias: polar residues.

As to quaternary structure, may interact with MYF5; regulates MYF5 expression. As to expression, expressed in muscles, as well as in primary myoblasts and myotubes (at protein level).

Its subcellular location is the nucleus. The protein resides in the cytoplasm. Down-regulates MYOD1 expression and may up-regulate MYF5 expression. May regulate microRNA (miRNA) transcription, up-regulating the expression of some myogenic miRNAs, including MIR1-1, MIR133A2, MIR133B and MIR206. Impairs the differentiation of myoblasts and may be involved in muscle regeneration. Reduces DUX4-induced nuclear localization of CTNNB1/beta-catenin and its subsequent activation of target genes. The protein is Double homeobox protein 4C (DUX4L9) of Homo sapiens (Human).